We begin with the raw amino-acid sequence, 107 residues long: Putative double-stranded DNA mimic protein PC1_1990 (107 aa).

The protein belongs to the putative dsDNA mimic protein family.

In terms of biological role, may act as a double-stranded DNA (dsDNA) mimic. Probably regulates the activity of a dsDNA-binding protein. This Pectobacterium carotovorum subsp. carotovorum (strain PC1) protein is Putative double-stranded DNA mimic protein PC1_1990.